The sequence spans 98 residues: NADH-ubiquinone oxidoreductase chain 4L (98 aa).

The next 3 membrane-spanning stretches (helical) occupy residues 1–21, 29–49, and 61–81; these read MPPIYMNIILAFTLSLMGMLV, SLLCLEGMMLSLFILGTTMAL, and IVLLVFAACEAAVGLSLLVMV.

This sequence belongs to the complex I subunit 4L family. Core subunit of respiratory chain NADH dehydrogenase (Complex I) which is composed of 45 different subunits.

The protein localises to the mitochondrion inner membrane. The enzyme catalyses a ubiquinone + NADH + 5 H(+)(in) = a ubiquinol + NAD(+) + 4 H(+)(out). Functionally, core subunit of the mitochondrial membrane respiratory chain NADH dehydrogenase (Complex I) which catalyzes electron transfer from NADH through the respiratory chain, using ubiquinone as an electron acceptor. Part of the enzyme membrane arm which is embedded in the lipid bilayer and involved in proton translocation. This Orycteropus afer (Aardvark) protein is NADH-ubiquinone oxidoreductase chain 4L (MT-ND4L).